The sequence spans 251 residues: Probable-ribose 5-phosphate isomerase (251 aa).

This sequence belongs to the ribose 5-phosphate isomerase family.

It catalyses the reaction aldehydo-D-ribose 5-phosphate = D-ribulose 5-phosphate. The protein operates within carbohydrate degradation; pentose phosphate pathway; D-ribose 5-phosphate from D-ribulose 5-phosphate (non-oxidative stage): step 1/1. This is Probable-ribose 5-phosphate isomerase (rpia-1) from Caenorhabditis elegans.